Here is a 187-residue protein sequence, read N- to C-terminus: Peroxisome assembly protein 22 (187 aa).

Residues 7-29 (NTFFGLAALGALGLGYSVYKSFI) form a helical membrane-spanning segment.

The protein belongs to the peroxin-22 family. In terms of assembly, interacts with PEX4.

It is found in the peroxisome membrane. Its function is as follows. Involved in peroxisome biogenesis. In Komagataella pastoris (Yeast), this protein is Peroxisome assembly protein 22 (PEX22).